Consider the following 763-residue polypeptide: Phosphoglycerol transferase I (763 aa).

4 helical membrane passes run 1–21, 24–44, 77–97, and 108–128; these read MSEL…AWKA, NTWW…LNIT, ILPG…LGWI, and VGYS…SPAF.

The protein belongs to the OpgB family.

Its subcellular location is the cell inner membrane. It carries out the reaction a phosphatidylglycerol + a membrane-derived-oligosaccharide D-glucose = a 1,2-diacyl-sn-glycerol + a membrane-derived-oligosaccharide 6-(glycerophospho)-D-glucose.. The protein operates within glycan metabolism; osmoregulated periplasmic glucan (OPG) biosynthesis. Its function is as follows. Transfers a phosphoglycerol residue from phosphatidylglycerol to the membrane-bound nascent glucan backbones. The sequence is that of Phosphoglycerol transferase I from Salmonella arizonae (strain ATCC BAA-731 / CDC346-86 / RSK2980).